The following is a 118-amino-acid chain: Fluoride-specific ion channel FluC 2 (118 aa).

The next 4 membrane-spanning stretches (helical) occupy residues 1-21, 33-53, 55-75, and 91-111; these read MIEA…RFAI, FPLA…YIIG, GVTT…FTTF, and ISTF…FAFL. Residues Gly-70 and Thr-73 each coordinate Na(+).

This sequence belongs to the fluoride channel Fluc/FEX (TC 1.A.43) family.

It is found in the cell membrane. The catalysed reaction is fluoride(in) = fluoride(out). With respect to regulation, na(+) is not transported, but it plays an essential structural role and its presence is essential for fluoride channel function. Its function is as follows. Fluoride-specific ion channel. Important for reducing fluoride concentration in the cell, thus reducing its toxicity. The sequence is that of Fluoride-specific ion channel FluC 2 from Bacillus cereus (strain ATCC 14579 / DSM 31 / CCUG 7414 / JCM 2152 / NBRC 15305 / NCIMB 9373 / NCTC 2599 / NRRL B-3711).